Consider the following 389-residue polypeptide: S-adenosylmethionine synthase (389 aa).

ATP is bound at residue histidine 17. Mg(2+) is bound at residue aspartate 19. Position 45 (glutamate 45) interacts with K(+). Residues glutamate 58 and glutamine 101 each contribute to the L-methionine site. Residues 101-111 (QSPDISQGVTE) are flexible loop. ATP-binding positions include 168-170 (DSK), 234-235 (RF), aspartate 243, 249-250 (RK), alanine 266, and lysine 270. Residue aspartate 243 participates in L-methionine binding. Lysine 274 is an L-methionine binding site.

It belongs to the AdoMet synthase family. In terms of assembly, homotetramer; dimer of dimers. Requires Mg(2+) as cofactor. K(+) is required as a cofactor.

It localises to the cytoplasm. It catalyses the reaction L-methionine + ATP + H2O = S-adenosyl-L-methionine + phosphate + diphosphate. Its pathway is amino-acid biosynthesis; S-adenosyl-L-methionine biosynthesis; S-adenosyl-L-methionine from L-methionine: step 1/1. In terms of biological role, catalyzes the formation of S-adenosylmethionine (AdoMet) from methionine and ATP. The overall synthetic reaction is composed of two sequential steps, AdoMet formation and the subsequent tripolyphosphate hydrolysis which occurs prior to release of AdoMet from the enzyme. The protein is S-adenosylmethionine synthase of Syntrophotalea carbinolica (strain DSM 2380 / NBRC 103641 / GraBd1) (Pelobacter carbinolicus).